The chain runs to 449 residues: 5'-deoxyadenosine deaminase (449 aa).

Positions 79 and 81 each coordinate Zn(2+). Positions 108 and 200 each coordinate substrate. H227 provides a ligand contact to Zn(2+). Positions 230 and 316 each coordinate substrate. A Zn(2+)-binding site is contributed by D316.

This sequence belongs to the metallo-dependent hydrolases superfamily. MTA/SAH deaminase family. As to quaternary structure, homotetramer. Zn(2+) is required as a cofactor.

The enzyme catalyses 5'-deoxyadenosine + H2O + H(+) = 5'-deoxyinosine + NH4(+). It catalyses the reaction S-adenosyl-L-homocysteine + H2O + H(+) = S-inosyl-L-homocysteine + NH4(+). The catalysed reaction is S-methyl-5'-thioadenosine + H2O + H(+) = S-methyl-5'-thioinosine + NH4(+). It carries out the reaction adenosine + H2O + H(+) = inosine + NH4(+). It functions in the pathway amino-acid biosynthesis; S-adenosyl-L-methionine biosynthesis. Its function is as follows. Catalyzes the deamination of three SAM-derived enzymatic products, namely 5'-deoxyadenosine, S-adenosyl-L-homocysteine, and 5'-methylthioadenosine, to produce the inosine analogs. Can also deaminate adenosine. The preferred substrate for this enzyme is 5'-deoxyadenosine, but all these substrates are efficiently deaminated. Likely functions in a S-adenosyl-L-methionine (SAM) recycling pathway from S-adenosyl-L-homocysteine (SAH) produced from SAM-dependent methylation reactions. May also be involved in the recycling of 5'-deoxyadenosine, whereupon the 5'-deoxyribose moiety of 5'-deoxyinosine is further metabolized to deoxyhexoses used for the biosynthesis of aromatic amino acids in methanogens. The chain is 5'-deoxyadenosine deaminase from Methanospirillum hungatei JF-1 (strain ATCC 27890 / DSM 864 / NBRC 100397 / JF-1).